An 884-amino-acid chain; its full sequence is Translation initiation factor IF-2 (884 aa).

2 stretches are compositionally biased toward basic and acidic residues: residues 110–153 (AKAK…KEKA) and 193–234 (KQKE…DHHV). Positions 110–291 (AKAKAEADAK…NRSTAPQSMA (182 aa)) are disordered. Basic residues predominate over residues 255 to 268 (GRRARNKPTNKKRG). Residues 384–553 (TRAPVVTIMG…LLQSEVLELK (170 aa)) enclose the tr-type G domain. The tract at residues 393–400 (GHVDHGKT) is G1. Position 393–400 (393–400 (GHVDHGKT)) interacts with GTP. Positions 418–422 (GITQH) are G2. The segment at 439 to 442 (DTPG) is G3. Residues 439–443 (DTPGH) and 493–496 (NKMD) contribute to the GTP site. Residues 493–496 (NKMD) form a G4 region. The tract at residues 529–531 (SAK) is G5.

This sequence belongs to the TRAFAC class translation factor GTPase superfamily. Classic translation factor GTPase family. IF-2 subfamily.

Its subcellular location is the cytoplasm. Its function is as follows. One of the essential components for the initiation of protein synthesis. Protects formylmethionyl-tRNA from spontaneous hydrolysis and promotes its binding to the 30S ribosomal subunits. Also involved in the hydrolysis of GTP during the formation of the 70S ribosomal complex. This chain is Translation initiation factor IF-2, found in Shewanella denitrificans (strain OS217 / ATCC BAA-1090 / DSM 15013).